The primary structure comprises 533 residues: Laccase-2 (533 aa).

The signal sequence occupies residues 1-23 (MFPGARILATLTLALHLLHGAHA). Plastocyanin-like domains lie at 25–171 (IGPA…LSLY), 173–336 (IDNA…LETN), and 382–501 (TAPV…FAED). Cu cation is bound by residues His98, His100, His143, and His145. Cystine bridges form between Cys119-Cys516 and Cys151-Cys238. Residues His427, His430, and His432 each contribute to the Cu cation site. A glycan (N-linked (GlcNAc...) (high mannose) asparagine) is linked at Asn467. Cu cation is bound by residues His483, Cys484, His485, and His489.

The protein belongs to the multicopper oxidase family. Requires Cu cation as cofactor. Post-translationally, N-glycosylated at Asn-467; contains a high-mannose glycan with a varying number of mannose residues.

It is found in the secreted. It catalyses the reaction 4 hydroquinone + O2 = 4 benzosemiquinone + 2 H2O. Functionally, lignin degradation and detoxification of lignin-derived products. This is Laccase-2 (POX2) from Pleurotus ostreatus (Oyster mushroom).